The primary structure comprises 626 residues: Chaperone protein HtpG (626 aa).

An a; substrate-binding region spans residues 1–339 (MSTNQETRGF…SNDLPLNVSR (339 aa)). The interval 340–555 (EILQDNKVTA…NDQMTTQMAK (216 aa)) is b. The c stretch occupies residues 556 to 626 (LFAAAGQPVP…FIKRVNSLLS (71 aa)).

This sequence belongs to the heat shock protein 90 family. In terms of assembly, homodimer.

It is found in the cytoplasm. Functionally, molecular chaperone. Has ATPase activity. The sequence is that of Chaperone protein HtpG from Histophilus somni (strain 129Pt) (Haemophilus somnus).